The primary structure comprises 852 residues: Ral guanine nucleotide dissociation stimulator (852 aa).

Residues K57–E194 enclose the N-terminal Ras-GEF domain. A Ras-GEF domain is found at P324–P586. Disordered stretches follow at residues W606–C627 and V665–R711. Composition is skewed to low complexity over residues S613–S624 and S683–T710. The 88-residue stretch at D736–F823 folds into the Ras-associating domain. Position 752 is a phosphotyrosine (Y752).

In terms of assembly, interacts with RIT1 and RIT2. Interacts with OOG1. Interacts with TRAF3. Interacts with HRAS. Phosphorylation of Tyr-752 by MET blocks HRAS binding.

Its subcellular location is the cytoplasm. The protein localises to the nucleus. Its function is as follows. Functions as a guanine nucleotide exchange factor (GEF) activating either RalA or RalB GTPases and plays an important role in intracellular transport. Interacts and acts as an effector molecule for R-Ras, H-Ras, K-Ras, and Rap. During bacterial clearance, recognizes 'Lys-33'-linked polyubiquitinated TRAF3 and subsequently mediates assembly of the exocyst complex. The chain is Ral guanine nucleotide dissociation stimulator (Ralgds) from Mus musculus (Mouse).